Consider the following 420-residue polypeptide: Threonine aspartase 1 (420 aa).

The disordered stretch occupies residues 1–23; sequence MTMEKGMSSGEGLPSRSSQVSAG. Catalysis depends on T234, which acts as the Nucleophile.

Belongs to the Ntn-hydrolase family. In terms of assembly, intramolecular proteolysis generates 2 subunits, alpha and beta, which reassemble through a non-covalent association to form the fully active enzyme.

Functionally, protease responsible for KMT2A/MLL1 processing and activation. It also activates KMT2D/MLL2. Through substrate activation, it controls the expression of HOXA genes, and the expression of key cell cycle regulators including CCNA1, CCNB1, CCNE1 and CDKN2A. This is Threonine aspartase 1 (TASP1) from Homo sapiens (Human).